Here is a 513-residue protein sequence, read N- to C-terminus: ATP synthase subunit alpha (513 aa).

169 to 176 is an ATP binding site; that stretch reads GDRQTGKT.

This sequence belongs to the ATPase alpha/beta chains family. In terms of assembly, F-type ATPases have 2 components, CF(1) - the catalytic core - and CF(0) - the membrane proton channel. CF(1) has five subunits: alpha(3), beta(3), gamma(1), delta(1), epsilon(1). CF(0) has three main subunits: a(1), b(2) and c(9-12). The alpha and beta chains form an alternating ring which encloses part of the gamma chain. CF(1) is attached to CF(0) by a central stalk formed by the gamma and epsilon chains, while a peripheral stalk is formed by the delta and b chains.

It localises to the cell inner membrane. It catalyses the reaction ATP + H2O + 4 H(+)(in) = ADP + phosphate + 5 H(+)(out). Produces ATP from ADP in the presence of a proton gradient across the membrane. The alpha chain is a regulatory subunit. The protein is ATP synthase subunit alpha of Actinobacillus pleuropneumoniae serotype 3 (strain JL03).